The chain runs to 84 residues: Cell division topological specificity factor (84 aa).

Belongs to the MinE family.

Functionally, prevents the cell division inhibition by proteins MinC and MinD at internal division sites while permitting inhibition at polar sites. This ensures cell division at the proper site by restricting the formation of a division septum at the midpoint of the long axis of the cell. In Chromohalobacter salexigens (strain ATCC BAA-138 / DSM 3043 / CIP 106854 / NCIMB 13768 / 1H11), this protein is Cell division topological specificity factor.